The primary structure comprises 773 residues: Serine/threonine-protein kinase CBK1 (773 aa).

Composition is skewed to polar residues over residues 50-59 and 178-217; these read LHDQYSSHME and GNYN…SPQR. Disordered regions lie at residues 50–111 and 177–275; these read LHDQ…GGNI and NGNY…QQQQ. Composition is skewed to low complexity over residues 218 to 256 and 265 to 275; these read QPAQ…QQQP and QQTQLQQQQQQ. The Protein kinase domain occupies 370–686; the sequence is FHTVQVIGKG…ADEIKSHPFF (317 aa). Residues 376–384 and lysine 399 each bind ATP; that span reads IGKGAFGEV. Residue aspartate 493 is the Proton acceptor of the active site. An AGC-kinase C-terminal domain is found at 687 to 771; the sequence is RGVDWNTIRQ…SRFDYLTRKN (85 aa).

The protein belongs to the protein kinase superfamily. STE Ser/Thr protein kinase family. COT1 subfamily.

It carries out the reaction L-seryl-[protein] + ATP = O-phospho-L-seryl-[protein] + ADP + H(+). The catalysed reaction is L-threonyl-[protein] + ATP = O-phospho-L-threonyl-[protein] + ADP + H(+). Its function is as follows. Protein kinase that seems to play a role in the regulation of cell morphogenesis and proliferation. This chain is Serine/threonine-protein kinase CBK1 (CBK1), found in Candida glabrata (strain ATCC 2001 / BCRC 20586 / JCM 3761 / NBRC 0622 / NRRL Y-65 / CBS 138) (Yeast).